The chain runs to 94 residues: C-C motif chemokine 17 (94 aa).

An N-terminal signal peptide occupies residues 1–23; sequence MAPLKMLALVTLLLGASLQHIHA. 2 disulfide bridges follow: C33/C57 and C34/C73.

This sequence belongs to the intercrine beta (chemokine CC) family. In terms of tissue distribution, constitutively expressed in thymus. Detected at lower levels in the lung, colon and small intestine. Expressed in stimulated peripheral blood mononuclear cells, but not in resting cells.

The protein localises to the secreted. In terms of biological role, chemokine, which displays chemotactic activity for T lymphocytes, preferentially Th2 cells, but not monocytes or granulocytes. Therefore plays an important role in a wide range of inflammatory and immunological processes. Acts by binding to CCR4 at T-cell surface. Mediates GM-CSF/CSF2-driven pain and inflammation. In the brain, required to maintain the typical, highly branched morphology of hippocampal microglia under homeostatic conditions. May be important for the appropriate adaptation of microglial morphology and synaptic plasticity to acute lipopolysaccharide (LPS)-induced neuroinflammation. Plays a role in wound healing, mainly by inducing fibroblast migration into the wound. This chain is C-C motif chemokine 17 (CCL17), found in Homo sapiens (Human).